The following is a 463-amino-acid chain: Phytase A (463 aa).

Positions 1–19 are cleaved as a signal peptide; it reads MAFFTVALSLYYLLSRVST. The N-linked (GlcNAc...) asparagine glycan is linked to asparagine 26. Residues cysteine 29 and cysteine 38 are joined by a disulfide bond. Asparagine 41 carries N-linked (GlcNAc...) asparagine glycosylation. Residues glutamine 48, tyrosine 49, arginine 79, histidine 80, arginine 83, and threonine 86 each coordinate 1D-myo-inositol hexakisphosphate. 4 disulfides stabilise this stretch: cysteine 69/cysteine 410, cysteine 211/cysteine 460, cysteine 260/cysteine 278, and cysteine 431/cysteine 439. Histidine 80 functions as the Nucleophile in the catalytic mechanism. N-linked (GlcNAc...) asparagine glycosylation is found at asparagine 103 and asparagine 118. Arginine 163 contributes to the 1D-myo-inositol hexakisphosphate binding site. An N-linked (GlcNAc...) asparagine glycan is attached at asparagine 203. Residue aspartate 207 participates in 1D-myo-inositol hexakisphosphate binding. N-linked (GlcNAc...) asparagine glycosylation occurs at asparagine 226. Lysine 297 is a binding site for 1D-myo-inositol hexakisphosphate. N-linked (GlcNAc...) asparagine glycosylation is found at asparagine 331 and asparagine 335. 1D-myo-inositol hexakisphosphate contacts are provided by histidine 357 and aspartate 358. N-linked (GlcNAc...) asparagine glycosylation is present at asparagine 372.

The protein belongs to the histidine acid phosphatase family. As to quaternary structure, monomer. Post-translationally, seems to be cleaved into at least two pieces, most likely due to proteases in the supernatant. The N-terminal fragment, called phyB seems to retain phytase activity.

The protein resides in the secreted. The catalysed reaction is 1D-myo-inositol hexakisphosphate + H2O = 1D-myo-inositol 1,2,4,5,6-pentakisphosphate + phosphate. The enzyme catalyses 1D-myo-inositol 1,2,4,5,6-pentakisphosphate + H2O = 1D-myo-inositol 1,2,5,6-tetrakisphosphate + phosphate. It catalyses the reaction 1D-myo-inositol 1,2,5,6-tetrakisphosphate + H2O = 1D-myo-inositol 1,2,6-trisphosphate + phosphate. It carries out the reaction 1D-myo-inositol 1,2,6-trisphosphate + H2O = 1D-myo-inositol 1,2-bisphosphate + phosphate. The catalysed reaction is 1D-myo-inositol 1,2-bisphosphate + H2O = 1D-myo-inositol 2-phosphate + phosphate. Functionally, catalyzes the phosphate monoester hydrolysis of phytic acid (myo-inositol hexakisphosphate), which results in the stepwise formation of myo-inositol pentakis-, tetrakis-, tris-, bis-, and monophosphates, as well as the liberation of inorganic phosphate. Myo-inositol 2-monophosphate is the end product. Has a broad substrate specificity and is also able to dephosphorylate other classic acid phosphatase substrates such as p-nitrophenyl phosphate, phenyl phosphate, fructose 1,6-bisphosphate, fructose 6-phosphate, glucose 6-phosphate, ribose 5-phosphate, alpha-glycerophosphate, beta-glycerophosphate, 3-phosphoglycerate, as well as ADP and ATP. The protein is Phytase A of Emericella nidulans (strain FGSC A4 / ATCC 38163 / CBS 112.46 / NRRL 194 / M139) (Aspergillus nidulans).